The sequence spans 137 residues: Fluoride-specific ion channel FluC 2 (137 aa).

The next 4 helical transmembrane spans lie at M3–G23, W44–A64, P76–L96, and L111–L131. Na(+)-binding residues include G86 and T89.

This sequence belongs to the fluoride channel Fluc/FEX (TC 1.A.43) family.

It is found in the cell inner membrane. It carries out the reaction fluoride(in) = fluoride(out). With respect to regulation, na(+) is not transported, but it plays an essential structural role and its presence is essential for fluoride channel function. Functionally, fluoride-specific ion channel. Important for reducing fluoride concentration in the cell, thus reducing its toxicity. This chain is Fluoride-specific ion channel FluC 2, found in Bradyrhizobium diazoefficiens (strain JCM 10833 / BCRC 13528 / IAM 13628 / NBRC 14792 / USDA 110).